Consider the following 365-residue polypeptide: TD and POZ domain-containing protein 3 (365 aa).

The region spanning 19 to 149 (KFCYNWTISN…EDQFTICCKV (131 aa)) is the MATH domain. One can recognise a BTB domain in the interval 188 to 250 (TDCCLLVAGH…EMMGFIYTGK (63 aa)).

Belongs to the Tdpoz family.

This Mus musculus (Mouse) protein is TD and POZ domain-containing protein 3.